A 364-amino-acid chain; its full sequence is GMP reductase (364 aa).

NADP(+) contacts are provided by residues 26–27 (SR), Lys-78, 132–134 (DVA), and 183–184 (IG). Residues Gly-184, Gly-186, and Cys-189 each contribute to the K(+) site. Cys-189 serves as the catalytic Thioimidate intermediate. Thr-191 functions as the Proton donor/acceptor in the catalytic mechanism. Residue Arg-192 coordinates K(+). Residues 222–224 (DGG), 245–246 (GG), 271–273 (GMS), and 289–293 (RASEG) each bind GMP. NADP(+) contacts are provided by residues Met-272, 288–289 (YR), and 317–320 (SACT).

It belongs to the IMPDH/GMPR family. GuaC type 1 subfamily. In terms of assembly, homotetramer.

It catalyses the reaction IMP + NH4(+) + NADP(+) = GMP + NADPH + 2 H(+). In terms of biological role, catalyzes the irreversible NADPH-dependent deamination of GMP to IMP. It functions in the conversion of nucleobase, nucleoside and nucleotide derivatives of G to A nucleotides, and in maintaining the intracellular balance of A and G nucleotides. The protein is GMP reductase (gmr-1) of Onchocerca volvulus.